Here is a 740-residue protein sequence, read N- to C-terminus: DNA (cytosine-5)-methyltransferase 3C (740 aa).

Disordered stretches follow at residues 75–99 (LTGD…PVMP) and 248–312 (FKPT…DVTN). Residues 309–441 (DVTNNKGNLE…LQDFFTTDPD (133 aa)) enclose the ADD domain. Residues 320–350 (HCLSCGRKDPVSFHPLFEGGLCQSCRDRFLE) form a GATA-type; atypical zinc finger. The PHD-type; atypical zinc finger occupies 361–417 (QSYCTVCCEGRELLLCSNTSCCRCFCVECLEVLVGAGTAEDVKLQEPWSCYMCLPQR). In terms of domain architecture, SAM-dependent MTase C5-type spans 462–740 (IRVLSLFDGI…APLKDHFACE (279 aa)). Residues Ile471, Thr473, Glu492, Asp514, and Ile515 each contribute to the S-adenosyl-L-methionine site. Cys538 is an active-site residue. S-adenosyl-L-methionine-binding residues include Arg719 and Trp721.

Belongs to the class I-like SAM-binding methyltransferase superfamily. C5-methyltransferase family. Homodimer. Interacts with DNMT3L. Interacts with SPOCD1; recruiting Dnmt3C to transposons. Specifically expressed in testis.

It localises to the nucleus. It carries out the reaction a 2'-deoxycytidine in DNA + S-adenosyl-L-methionine = a 5-methyl-2'-deoxycytidine in DNA + S-adenosyl-L-homocysteine + H(+). Its function is as follows. DNA methyltransferase that specifically methylates the promoters of evolutionarily young retrotransposons in the male germline. De novo methylation and subsequent repression of transposable elements prevents their mobilization, which is essential for germline integrity. Compared to Dnmt3a and Dnmt3b, shows lower DNA methyltransferase efficiency. The protein is DNA (cytosine-5)-methyltransferase 3C of Mus musculus (Mouse).